Here is an 89-residue protein sequence, read N- to C-terminus: Small ribosomal subunit protein uS15 (89 aa).

It belongs to the universal ribosomal protein uS15 family. In terms of assembly, part of the 30S ribosomal subunit. Forms a bridge to the 50S subunit in the 70S ribosome, contacting the 23S rRNA.

Its function is as follows. One of the primary rRNA binding proteins, it binds directly to 16S rRNA where it helps nucleate assembly of the platform of the 30S subunit by binding and bridging several RNA helices of the 16S rRNA. Functionally, forms an intersubunit bridge (bridge B4) with the 23S rRNA of the 50S subunit in the ribosome. This is Small ribosomal subunit protein uS15 from Actinobacillus pleuropneumoniae serotype 5b (strain L20).